A 299-amino-acid chain; its full sequence is uncharacterized protein (299 aa).

Positions 1–59 (MDKIHAMQLFIKVAELESFSRAADFFALPKGSVSRQIQALEHQLGTQLLQRTTRRVKLT) constitute an HTH lysR-type domain. A DNA-binding region (H-T-H motif) is located at residues 19–38 (FSRAADFFALPKGSVSRQIQ).

The protein belongs to the LysR transcriptional regulatory family.

This is an uncharacterized protein from Escherichia coli (strain K12).